Reading from the N-terminus, the 650-residue chain is Threonine--tRNA ligase (650 aa).

The TGS domain maps to 1–61 (MIKITFPDGA…DEDGTLEIVM (61 aa)). The catalytic stretch occupies residues 242–540 (DHRKLGKELD…LIETYKGAFP (299 aa)). 3 residues coordinate Zn(2+): Cys336, His387, and His517.

The protein belongs to the class-II aminoacyl-tRNA synthetase family. Homodimer. It depends on Zn(2+) as a cofactor.

It localises to the cytoplasm. It carries out the reaction tRNA(Thr) + L-threonine + ATP = L-threonyl-tRNA(Thr) + AMP + diphosphate + H(+). In terms of biological role, catalyzes the attachment of threonine to tRNA(Thr) in a two-step reaction: L-threonine is first activated by ATP to form Thr-AMP and then transferred to the acceptor end of tRNA(Thr). Also edits incorrectly charged L-seryl-tRNA(Thr). This Streptococcus suis (strain 98HAH33) protein is Threonine--tRNA ligase.